The sequence spans 728 residues: Histone demethylase JHD2 (728 aa).

In terms of domain architecture, JmjN spans 4–47; sequence IPALYPTEQEFKNPIDYLSNPHIKRLGVRYGMVKVVPPNGFCPP. The PHD-type zinc finger occupies 235-285; the sequence is DDACIVCRKTNDPKRTILCDSCDKPFHIYCLSPPLERVPSGDWICNTCIVG. Residues 381 to 549 form the JmjC domain; the sequence is KYCDHPMNLT…YGFGAITDYK (169 aa). 3 residues coordinate Fe cation: H427, D430, and H517.

Belongs to the JARID1 histone demethylase family. Requires Fe(2+) as cofactor.

The protein localises to the nucleus. The catalysed reaction is N(6),N(6),N(6)-trimethyl-L-lysyl(4)-[histone H3] + 3 2-oxoglutarate + 3 O2 = L-lysyl(4)-[histone H3] + 3 formaldehyde + 3 succinate + 3 CO2. Its function is as follows. Histone demethylase that demethylates 'Lys-4' of histone H3, thereby playing a central role in histone code. Demethylates trimethylated H3 'Lys-4'. In Saccharomyces cerevisiae (strain ATCC 204508 / S288c) (Baker's yeast), this protein is Histone demethylase JHD2 (JHD2).